A 116-amino-acid polypeptide reads, in one-letter code: Large ribosomal subunit protein uL24c (116 aa).

It belongs to the universal ribosomal protein uL24 family. In terms of assembly, part of the 50S ribosomal subunit.

It localises to the plastid. The protein localises to the chloroplast. One of two assembly initiator proteins, it binds directly to the 5'-end of the 23S rRNA, where it nucleates assembly of the 50S subunit. The polypeptide is Large ribosomal subunit protein uL24c (rpl24) (Pyropia yezoensis (Susabi-nori)).